Consider the following 412-residue polypeptide: Pyruvate dehydrogenase E1 component subunit alpha, mitochondrial (412 aa).

The pyruvate site is built by histidine 104, tyrosine 130, arginine 131, alanine 169, glycine 177, valine 179, aspartate 208, glycine 209, alanine 210, asparagine 237, and tyrosine 239. Thiamine diphosphate contacts are provided by tyrosine 130 and arginine 131. Positions 177, 179, 208, 209, 210, and 237 each coordinate thiamine diphosphate. Residue aspartate 208 coordinates Mg(2+). Residues asparagine 237 and tyrosine 239 each coordinate Mg(2+). Histidine 304 contributes to the thiamine diphosphate binding site.

Tetramer of 2 alpha and 2 beta subunits. The cofactor is thiamine diphosphate. It depends on Mg(2+) as a cofactor.

The protein localises to the mitochondrion matrix. It carries out the reaction N(6)-[(R)-lipoyl]-L-lysyl-[protein] + pyruvate + H(+) = N(6)-[(R)-S(8)-acetyldihydrolipoyl]-L-lysyl-[protein] + CO2. E1 activity is regulated by phosphorylation (inactivation) and dephosphorylation (activation) of the alpha subunit. Its function is as follows. The pyruvate dehydrogenase complex catalyzes the overall conversion of pyruvate to acetyl-CoA and CO(2). It contains multiple copies of three enzymatic components: pyruvate dehydrogenase (E1), dihydrolipoamide acetyltransferase (E2) and lipoamide dehydrogenase (E3). This is Pyruvate dehydrogenase E1 component subunit alpha, mitochondrial (PDA1) from Kluyveromyces lactis (strain ATCC 8585 / CBS 2359 / DSM 70799 / NBRC 1267 / NRRL Y-1140 / WM37) (Yeast).